A 505-amino-acid polypeptide reads, in one-letter code: Dolichyl pyrophosphate Glc1Man9GlcNAc2 alpha-1,3-glucosyltransferase (505 aa).

Residues 1–3 (MAE) lie on the Lumenal side of the membrane. Residues 4 to 24 (IYPSLVQCAIVATAFKVLLFP) form a helical membrane-spanning segment. Over 25–101 (AYKSTDFEVH…DSWQTVYFQR (77 aa)) the chain is Cytoplasmic. Residues 102–122 (WTVIVTELVLLYALQMFVDST) traverse the membrane as a helical segment. Over 123–128 (PGVSKR) the chain is Lumenal. Residues 129–149 (AAHAAAVSILLSPGLLIIDHI) traverse the membrane as a helical segment. The Cytoplasmic portion of the chain corresponds to 150–152 (HFQ). Residues 153–169 (YNGVMYGILIASLVLAK) form a helical membrane-spanning segment. Topologically, residues 170–173 (KKSS) are lumenal. A helical membrane pass occupies residues 174–194 (LLASGLVFAALLCMKHIYLYL). Over 195 to 224 (APAYFVYLLRVYCLPPKLSPRSIFRIQFFN) the chain is Cytoplasmic. Residues 225-245 (CVKLGGGIAAIFAAAFGPFAL) traverse the membrane as a helical segment. Over 246 to 319 (KNQIPQIFSR…TSFAVLPDIT (74 aa)) the chain is Lumenal. Residues 320-340 (PRMCFVLTLLFQAIPLIKLFM) form a helical membrane-spanning segment. Over 341–359 (RPTWEGFIGGVTLCGYASF) the chain is Cytoplasmic. The helical transmembrane segment at 360 to 380 (LFGWHVHEKAILLVIIPFSLI) threads the bilayer. The Lumenal segment spans residues 381–386 (ALKDRR). The chain crosses the membrane as a helical span at residues 387–407 (YLGAFRPLAVAGHVSLFPLIF). Residues 408–409 (TP) lie on the Cytoplasmic side of the membrane. A helical membrane pass occupies residues 410 to 430 (AEFPIKTVYTIFWLVLFLMAF). At 431 to 450 (DRLAPAPTRQRLFLFDRFST) the chain is on the lumenal side. A helical membrane pass occupies residues 451–471 (AYITVSIPLIFYCSLMHGIIF). Residues 472–480 (GKSYEFLPL) are Cytoplasmic-facing. The helical transmembrane segment at 481 to 501 (MFTSSYSAIGVVGSWLGFMVV) threads the bilayer. The Lumenal segment spans residues 502-505 (YFTE).

The protein belongs to the ALG6/ALG8 glucosyltransferase family.

The protein resides in the endoplasmic reticulum membrane. The enzyme catalyses an alpha-D-Glc-(1-&gt;3)-alpha-D-Man-(1-&gt;2)-alpha-D-Man-(1-&gt;2)-alpha-D-Man-(1-&gt;3)-[alpha-D-Man-(1-&gt;2)-alpha-D-Man-(1-&gt;3)-[alpha-D-Man-(1-&gt;2)-alpha-D-Man-(1-&gt;6)]-alpha-D-Man-(1-&gt;6)]-beta-D-Man-(1-&gt;4)-beta-D-GlcNAc-(1-&gt;4)-alpha-D-GlcNAc-diphospho-di-trans,poly-cis-dolichol + a di-trans,poly-cis-dolichyl beta-D-glucosyl phosphate = an alpha-D-Glc-(1-&gt;3)-alpha-D-Glc-(1-&gt;3)-alpha-D-Man-(1-&gt;2)-alpha-D-Man-(1-&gt;2)-alpha-D-Man-(1-&gt;3)-[alpha-D-Man-(1-&gt;2)-alpha-D-Man-(1-&gt;3)-[alpha-D-Man-(1-&gt;2)-alpha-D-Man-(1-&gt;6)]-alpha-D-Man-(1-&gt;6)]-beta-D-Man-(1-&gt;4)-beta-D-GlcNAc-(1-&gt;4)-alpha-D-GlcNAc-diphospho-di-trans,poly-cis-dolichol + a di-trans,poly-cis-dolichyl phosphate + H(+). It participates in protein modification; protein glycosylation. Its function is as follows. Dolichyl pyrophosphate Glc1Man9GlcNAc2 alpha-1,3-glucosyltransferase that operates in the biosynthetic pathway of dolichol-linked oligosaccharides, the glycan precursors employed in protein asparagine (N)-glycosylation. The assembly of dolichol-linked oligosaccharides begins on the cytosolic side of the endoplasmic reticulum membrane and finishes in its lumen. The sequential addition of sugars to dolichol pyrophosphate produces dolichol-linked oligosaccharides containing fourteen sugars, including two GlcNAcs, nine mannoses and three glucoses. Once assembled, the oligosaccharide is transferred from the lipid to nascent proteins by oligosaccharyltransferases. In the lumen of the endoplasmic reticulum, adds the second glucose residue from dolichyl phosphate glucose (Dol-P-Glc) onto the lipid-linked oligosaccharide intermediate Glc(1)Man(9)GlcNAc(2)-PP-Dol to produce Glc(2)Man(9)GlcNAc(2)-PP-Dol. The chain is Dolichyl pyrophosphate Glc1Man9GlcNAc2 alpha-1,3-glucosyltransferase (alg-8) from Neurospora crassa (strain ATCC 24698 / 74-OR23-1A / CBS 708.71 / DSM 1257 / FGSC 987).